A 254-amino-acid chain; its full sequence is Ribosomal RNA large subunit methyltransferase E (254 aa).

A disordered region spans residues 1-28 (MTTPPRGPDGRPLKVRVKKSRGRTTSSQ). The segment covering 13–22 (LKVRVKKSRG) has biased composition (basic residues). S-adenosyl-L-methionine contacts are provided by Gly-80, Trp-82, Asp-103, Asp-119, and Asp-143. Lys-183 functions as the Proton acceptor in the catalytic mechanism. The segment at 231–254 (DRAETDDAGTDGTGTAEAQAPRDQ) is disordered.

This sequence belongs to the class I-like SAM-binding methyltransferase superfamily. RNA methyltransferase RlmE family.

Its subcellular location is the cytoplasm. It catalyses the reaction uridine(2552) in 23S rRNA + S-adenosyl-L-methionine = 2'-O-methyluridine(2552) in 23S rRNA + S-adenosyl-L-homocysteine + H(+). Its function is as follows. Specifically methylates the uridine in position 2552 of 23S rRNA at the 2'-O position of the ribose in the fully assembled 50S ribosomal subunit. The chain is Ribosomal RNA large subunit methyltransferase E from Xanthobacter autotrophicus (strain ATCC BAA-1158 / Py2).